Here is a 200-residue protein sequence, read N- to C-terminus: Adenylate kinase (200 aa).

10–15 is an ATP binding site; it reads GAGKGT. The NMP stretch occupies residues 30–59; sequence STGDMLRAAVAAETPVGLEAKAIMESGGLV. AMP contacts are provided by residues T31, R36, 57-59, 85-88, and Q92; these read GLV and GFPR. The LID stretch occupies residues 126 to 142; the sequence is KRAEETAARGQPVRKDD. R127 is a binding site for ATP. The AMP site is built by R139 and R150. K178 contributes to the ATP binding site.

Belongs to the adenylate kinase family. Monomer.

The protein localises to the cytoplasm. It carries out the reaction AMP + ATP = 2 ADP. It functions in the pathway purine metabolism; AMP biosynthesis via salvage pathway; AMP from ADP: step 1/1. Its function is as follows. Catalyzes the reversible transfer of the terminal phosphate group between ATP and AMP. Plays an important role in cellular energy homeostasis and in adenine nucleotide metabolism. This is Adenylate kinase from Methylorubrum extorquens (strain CM4 / NCIMB 13688) (Methylobacterium extorquens).